The primary structure comprises 300 residues: Ribosomal protein bS6--L-glutamate ligase (300 aa).

The region spanning 104-287 (MQLLARQGID…IAGKMIRWIE (184 aa)) is the ATP-grasp domain. ATP-binding positions include lysine 141, 178 to 179 (EY), aspartate 187, and 211 to 213 (RSN). Aspartate 248, glutamate 260, and asparagine 262 together coordinate Mg(2+). Residues aspartate 248, glutamate 260, and asparagine 262 each contribute to the Mn(2+) site.

It belongs to the RimK family. Mg(2+) serves as cofactor. Requires Mn(2+) as cofactor.

In terms of biological role, an L-glutamate ligase that catalyzes the ATP-dependent post-translational addition of glutamate residues to the C-terminus of ribosomal protein bS6 (RpsF). Is also able to catalyze the synthesis of poly-alpha-glutamate in vitro, via ATP hydrolysis from unprotected glutamate as substrate. The number of glutamate residues added to either RpsF or to poly-alpha-glutamate changes with pH. The polypeptide is Ribosomal protein bS6--L-glutamate ligase (Escherichia coli O139:H28 (strain E24377A / ETEC)).